The primary structure comprises 288 residues: MLKKLKIKLQYLLPQHALTRLAGWAANKKAGWLTQQVIKIFASYYRVNIKEAQYTEFSAYSSFNEFFIRSLRSDVRPIAAGDNILVQPADGTISESGRIDKDKILQAKGHDYSLEALLAGQSLLAKEFENGQFVTTYLAPGDYHRVHMPCDGVLREMIYVPGSLFSVNAFFAENVPYLFARNERVICIFNTAFGTMAQILVGAMIVGSIETLWSGPVDSQRKGIIQRWVYPDEGSEAPIILKKGEEMGLFKLGSTVINLFVSNKIKLASHLQNGSITRLGEILGEAPH.

Active-site charge relay system; for autoendoproteolytic cleavage activity residues include D90, H147, and S254. The Schiff-base intermediate with substrate; via pyruvic acid; for decarboxylase activity role is filled by S254. Position 254 is a pyruvic acid (Ser); by autocatalysis (S254).

It belongs to the phosphatidylserine decarboxylase family. PSD-B subfamily. Prokaryotic type I sub-subfamily. In terms of assembly, heterodimer of a large membrane-associated beta subunit and a small pyruvoyl-containing alpha subunit. Pyruvate is required as a cofactor. In terms of processing, is synthesized initially as an inactive proenzyme. Formation of the active enzyme involves a self-maturation process in which the active site pyruvoyl group is generated from an internal serine residue via an autocatalytic post-translational modification. Two non-identical subunits are generated from the proenzyme in this reaction, and the pyruvate is formed at the N-terminus of the alpha chain, which is derived from the carboxyl end of the proenzyme. The autoendoproteolytic cleavage occurs by a canonical serine protease mechanism, in which the side chain hydroxyl group of the serine supplies its oxygen atom to form the C-terminus of the beta chain, while the remainder of the serine residue undergoes an oxidative deamination to produce ammonia and the pyruvoyl prosthetic group on the alpha chain. During this reaction, the Ser that is part of the protease active site of the proenzyme becomes the pyruvoyl prosthetic group, which constitutes an essential element of the active site of the mature decarboxylase.

The protein resides in the cell membrane. The enzyme catalyses a 1,2-diacyl-sn-glycero-3-phospho-L-serine + H(+) = a 1,2-diacyl-sn-glycero-3-phosphoethanolamine + CO2. It functions in the pathway phospholipid metabolism; phosphatidylethanolamine biosynthesis; phosphatidylethanolamine from CDP-diacylglycerol: step 2/2. Catalyzes the formation of phosphatidylethanolamine (PtdEtn) from phosphatidylserine (PtdSer). This is Phosphatidylserine decarboxylase proenzyme from Hamiltonella defensa subsp. Acyrthosiphon pisum (strain 5AT).